The chain runs to 311 residues: Aurora kinase (311 aa).

One can recognise a Protein kinase domain in the interval 20–300; sequence FEIGRFLGRG…IEDILRHPFL (281 aa). Lysine 49 serves as a coordination point for ATP. Residue aspartate 143 is the Proton acceptor of the active site. The segment at 189–216 is activation loop; it reads DFGWSVHHPTHGGRRRTQCGTLDYLPPE. Position 205 is a phosphothreonine; by autocatalysis (threonine 205). Positions 280–299 match the Destruction (D)-box motif; it reads MLIRSPEARISIEDILRHPF.

It belongs to the protein kinase superfamily. Ser/Thr protein kinase family. Aurora subfamily. In terms of assembly, interacts with EB1 (via C-terminal residues 101-238). Phosphorylated in mitosis and cytokinesis. Activated by autophosphorylation at Thr-205.

The protein resides in the nucleus. It is found in the cytoplasm. Its subcellular location is the cytoskeleton. The protein localises to the microtubule organizing center. It localises to the centrosome. The protein resides in the spindle. It is found in the spindle pole. Its subcellular location is the nucleus membrane. It carries out the reaction L-seryl-[protein] + ATP = O-phospho-L-seryl-[protein] + ADP + H(+). The enzyme catalyses L-threonyl-[protein] + ATP = O-phospho-L-threonyl-[protein] + ADP + H(+). Its activity is regulated as follows. Activated by cell-cycle phase specific phosphorylation. Inhibited by ATP-competitive inhibitors N-[4-[[6-Methoxy-7-[3-(4-morpholinyl)propoxy]-4-quinazolinyl]amino]phenyl]benzamide (ZM447439) and cyclopropanecarboxylic acid-(3-(4-(3-trifluoromethylphenylamino)-pyrimidin-2-ylamino)-phenyl)-amide (CFPPA). Inhibition leads to reduced growth, increased cytokinesis, microtubular defects, and increased ploidy of the cells. Involved in regulation of the cell cycle. Required for mitotic cell division and cytokinesis. Based on its localization to centrosomes and spindle microtubules, as well as to various cytoskeletal components such as the median body, parental attachment disk, and anterior and posterior-lateral paraflagellar dense rods, may coordinate reorganization and segregation of tubulin-containing structures during mitosis and cytokinesis. May regulate microtubule disassembly by phosphorylating cytoskeletal proteins leading to their destabilization. Phosphorylates EB1 at 'Ser-148' in vitro. Phosphorylates histone H3 in vitro. The chain is Aurora kinase from Giardia intestinalis (strain ATCC 50803 / WB clone C6) (Giardia lamblia).